A 276-amino-acid polypeptide reads, in one-letter code: Probable endonuclease 4 (276 aa).

Positions 70, 108, 143, 176, 179, 210, 223, 225, and 255 each coordinate Zn(2+).

Belongs to the AP endonuclease 2 family. The cofactor is Zn(2+).

It catalyses the reaction Endonucleolytic cleavage to 5'-phosphooligonucleotide end-products.. In terms of biological role, endonuclease IV plays a role in DNA repair. It cleaves phosphodiester bonds at apurinic or apyrimidinic (AP) sites, generating a 3'-hydroxyl group and a 5'-terminal sugar phosphate. This Mesomycoplasma hyopneumoniae (strain J / ATCC 25934 / NCTC 10110) (Mycoplasma hyopneumoniae) protein is Probable endonuclease 4.